Here is a 677-residue protein sequence, read N- to C-terminus: Nuclear fusion protein FUS2 (677 aa).

Residue Thr20 is modified to Phosphothreonine. Residues Ser67, Ser72, and Ser84 each carry the phosphoserine modification. The residue at position 88 (Thr88) is a Phosphothreonine. 2 positions are modified to phosphoserine: Ser100 and Ser106. The region spanning 112–326 (KFYKIVQEFY…KYSLFSNKLE (215 aa)) is the DH domain.

The protein resides in the cell tip. Promotes cell fusion during zygote formation. The chain is Nuclear fusion protein FUS2 (FUS2) from Saccharomyces cerevisiae (strain ATCC 204508 / S288c) (Baker's yeast).